A 339-amino-acid polypeptide reads, in one-letter code: Dual specificity protein phosphatase 12 (339 aa).

An N-acetylmethionine modification is found at M1. Residues 1–22 (MLEVQSSNHGCERQAPTTSPAS) show a composition bias toward polar residues. The interval 1-25 (MLEVQSSNHGCERQAPTTSPASSAG) is disordered. Residues 26–170 (HAVEVRPGLY…LKLYEAMGHE (145 aa)) enclose the Tyrosine-protein phosphatase domain. The Phosphocysteine intermediate role is filled by C114. Position 115–120 (115–120 (HAGVSR)) interacts with substrate. Position 334 is a phosphoserine (S334).

Belongs to the protein-tyrosine phosphatase family. Non-receptor class dual specificity subfamily. In terms of assembly, monomer. Requires Zn(2+) as cofactor.

It localises to the nucleus. Its subcellular location is the cytoplasm. It is found in the cytosol. It carries out the reaction O-phospho-L-tyrosyl-[protein] + H2O = L-tyrosyl-[protein] + phosphate. The enzyme catalyses O-phospho-L-seryl-[protein] + H2O = L-seryl-[protein] + phosphate. The catalysed reaction is O-phospho-L-threonyl-[protein] + H2O = L-threonyl-[protein] + phosphate. Its function is as follows. Dual specificity phosphatase; can dephosphorylate both phosphotyrosine and phosphoserine or phosphothreonine residues. Can dephosphorylate glucokinase (in vitro). Has phosphatase activity with the synthetic substrate 6,8-difluoro-4-methylumbelliferyl phosphate and other in vitro substrates. The chain is Dual specificity protein phosphatase 12 (Dusp12) from Rattus norvegicus (Rat).